A 655-amino-acid chain; its full sequence is Very long-chain specific acyl-CoA dehydrogenase, mitochondrial (655 aa).

Residues 1 to 40 (MQAARIAPSLGRQLLRFGGGSSRPTALLGQPWPGPARRPY) constitute a mitochondrion transit peptide. Positions 41-482 (AGGAAQLALD…ALQGCMDKGK (442 aa)) are catalytic. N6-acetyllysine is present on K51. K71 is subject to N6-acetyllysine; alternate. K71 carries the post-translational modification N6-succinyllysine; alternate. K195 carries the post-translational modification N6-succinyllysine. 214-223 (FCLTEPSSGS) contacts FAD. Position 237 is an S-nitrosocysteine (C237). At K239 the chain carries N6-acetyllysine; alternate. K239 is modified (N6-succinyllysine; alternate). 249–251 (WIS) provides a ligand contact to FAD. An N6-acetyllysine; alternate mark is found at K276 and K278. K276 and K278 each carry N6-succinyllysine; alternate. K298 carries the N6-acetyllysine modification. K331 carries the N6-acetyllysine; alternate modification. The residue at position 331 (K331) is an N6-succinyllysine; alternate. Residue K372 is modified to N6-succinyllysine. Substrate is bound at residue 461 to 463 (FEG). The active-site Proton acceptor is E462. 464 to 466 (TND) lines the FAD pocket. Residue K482 is modified to N6-acetyllysine; alternate. K482 bears the N6-succinyllysine; alternate mark. The segment at 483–516 (ELSGLGSALKNPFGNAGLLLGEAGKQLRRRAGLG) is membrane-anchoring. S517 and S522 each carry phosphoserine. An N6-acetyllysine modification is found at K550. K556 carries the N6-acetyllysine; alternate modification. The residue at position 556 (K556) is an N6-succinyllysine; alternate. FAD is bound at residue Q562. Residue K639 is modified to N6-succinyllysine.

It belongs to the acyl-CoA dehydrogenase family. As to quaternary structure, homodimer. Homodimerizes after import into the mitochondrion. FAD is required as a cofactor. In terms of processing, S-nitrosylation at Cys-237 in liver improves catalytic efficiency.

It is found in the mitochondrion inner membrane. The catalysed reaction is a very-long-chain 2,3-saturated fatty acyl-CoA + oxidized [electron-transfer flavoprotein] + H(+) = a very-long-chain (2E)-enoyl-CoA + reduced [electron-transfer flavoprotein]. It catalyses the reaction dodecanoyl-CoA + oxidized [electron-transfer flavoprotein] + H(+) = (2E)-dodecenoyl-CoA + reduced [electron-transfer flavoprotein]. The enzyme catalyses tetradecanoyl-CoA + oxidized [electron-transfer flavoprotein] + H(+) = (2E)-tetradecenoyl-CoA + reduced [electron-transfer flavoprotein]. It carries out the reaction oxidized [electron-transfer flavoprotein] + hexadecanoyl-CoA + H(+) = (2E)-hexadecenoyl-CoA + reduced [electron-transfer flavoprotein]. The catalysed reaction is octadecanoyl-CoA + oxidized [electron-transfer flavoprotein] + H(+) = (2E)-octadecenoyl-CoA + reduced [electron-transfer flavoprotein]. It catalyses the reaction eicosanoyl-CoA + oxidized [electron-transfer flavoprotein] + H(+) = (2E)-eicosenoyl-CoA + reduced [electron-transfer flavoprotein]. The enzyme catalyses docosanoyl-CoA + oxidized [electron-transfer flavoprotein] + H(+) = (2E)-docosenoyl-CoA + reduced [electron-transfer flavoprotein]. It carries out the reaction tetracosanoyl-CoA + oxidized [electron-transfer flavoprotein] + H(+) = (2E)-tetracosenoyl-CoA + reduced [electron-transfer flavoprotein]. It participates in lipid metabolism; mitochondrial fatty acid beta-oxidation. Functionally, very long-chain specific acyl-CoA dehydrogenase is one of the acyl-CoA dehydrogenases that catalyze the first step of mitochondrial fatty acid beta-oxidation, an aerobic process breaking down fatty acids into acetyl-CoA and allowing the production of energy from fats. The first step of fatty acid beta-oxidation consists in the removal of one hydrogen from C-2 and C-3 of the straight-chain fatty acyl-CoA thioester, resulting in the formation of trans-2-enoyl-CoA. Among the different mitochondrial acyl-CoA dehydrogenases, very long-chain specific acyl-CoA dehydrogenase acts specifically on acyl-CoAs with saturated 12 to 24 carbons long primary chains. The chain is Very long-chain specific acyl-CoA dehydrogenase, mitochondrial from Macaca fascicularis (Crab-eating macaque).